A 75-amino-acid polypeptide reads, in one-letter code: Protein CYSTEINE-RICH TRANSMEMBRANE MODULE 5 (75 aa).

The interval 1-29 (MSQYSQNQYAGAYPTPPVSTGPYVAPPPL) is disordered. Pro residues predominate over residues 14 to 29 (PTPPVSTGPYVAPPPL). A helical transmembrane segment spans residues 52-69 (AADGFLKGCLATMLACCV).

It belongs to the CYSTM1 family. As to quaternary structure, heterodimers. Interacts with CYSTM7 and WIH1/CYSTM13. Mostly expressed in roots, stems, rosette leaves and siliques and, to a lower extent, in flowers and cauline leaves.

The protein localises to the cell membrane. It is found in the nucleus. In terms of biological role, involved in resistance to abiotic stress. The chain is Protein CYSTEINE-RICH TRANSMEMBRANE MODULE 5 from Arabidopsis thaliana (Mouse-ear cress).